Here is a 160-residue protein sequence, read N- to C-terminus: Ribosomal RNA large subunit methyltransferase H (160 aa).

S-adenosyl-L-methionine is bound at residue G108.

It belongs to the RNA methyltransferase RlmH family. As to quaternary structure, homodimer.

It is found in the cytoplasm. The enzyme catalyses pseudouridine(1915) in 23S rRNA + S-adenosyl-L-methionine = N(3)-methylpseudouridine(1915) in 23S rRNA + S-adenosyl-L-homocysteine + H(+). Functionally, specifically methylates the pseudouridine at position 1915 (m3Psi1915) in 23S rRNA. The chain is Ribosomal RNA large subunit methyltransferase H from Rhodopseudomonas palustris (strain BisA53).